A 444-amino-acid polypeptide reads, in one-letter code: MKYTPHTPDEVREMLSSLGLSSIEELFSDIPEEVKLKRPLNLPSGMSELEVKKHLANLAAKNGSADKYTVFLGAGVYDHYVPAVVNHILLRSEFYTAYTPYQAEMSQGVLQSIFEYQTMICELTGLDITNASMYDGGSALAEAALMAVSQTRRDKVLVLATVHPEYRSVVKTYTWGPEIEVVEVPYKSGTVDLEKLEELIDDKTAAVLVQHPNFFGQLEPVEEISRLIHAQKGLLVVAVDPISLGILKPPAEYGADIAVGDGQALGNGLAFGGPHLGFFAARKDLARRMPGRLVGLTTDKEGNRGFVLTLQAREQHIRREKATSNICSNQALNALAATVYLATVGKKGLKEIALQSLQKAHYAFERLIGEGYEPLFSGPFFKEFVVKVKNEEEITQKLLKHHILAGPGISRFYPELAPALMIAVTEKRTREEIDNLVEVLGGDR.

This sequence belongs to the GcvP family. N-terminal subunit subfamily. In terms of assembly, the glycine cleavage system is composed of four proteins: P, T, L and H. In this organism, the P 'protein' is a heterodimer of two subunits.

The catalysed reaction is N(6)-[(R)-lipoyl]-L-lysyl-[glycine-cleavage complex H protein] + glycine + H(+) = N(6)-[(R)-S(8)-aminomethyldihydrolipoyl]-L-lysyl-[glycine-cleavage complex H protein] + CO2. The glycine cleavage system catalyzes the degradation of glycine. The P protein binds the alpha-amino group of glycine through its pyridoxal phosphate cofactor; CO(2) is released and the remaining methylamine moiety is then transferred to the lipoamide cofactor of the H protein. This is Probable glycine dehydrogenase (decarboxylating) subunit 1 from Carboxydothermus hydrogenoformans (strain ATCC BAA-161 / DSM 6008 / Z-2901).